The chain runs to 187 residues: UPF0301 protein VC_0467 (187 aa).

This sequence belongs to the UPF0301 (AlgH) family.

This is UPF0301 protein VC_0467 from Vibrio cholerae serotype O1 (strain ATCC 39315 / El Tor Inaba N16961).